Reading from the N-terminus, the 368-residue chain is tRNA-specific 2-thiouridylase MnmA (368 aa).

Residues 11-18 (GMSGGVDS) and Met37 each bind ATP. Positions 97-99 (NPD) are interaction with target base in tRNA. Catalysis depends on Cys102, which acts as the Nucleophile. A disulfide bond links Cys102 and Cys199. Gly127 provides a ligand contact to ATP. Positions 149–151 (KDQ) are interaction with tRNA. Cys199 (cysteine persulfide intermediate) is an active-site residue. An interaction with tRNA region spans residues 311–312 (RY).

It belongs to the MnmA/TRMU family. Interacts with TusE.

The protein resides in the cytoplasm. It catalyses the reaction S-sulfanyl-L-cysteinyl-[protein] + uridine(34) in tRNA + AH2 + ATP = 2-thiouridine(34) in tRNA + L-cysteinyl-[protein] + A + AMP + diphosphate + H(+). Catalyzes the 2-thiolation of uridine at the wobble position (U34) of tRNA(Lys), tRNA(Glu) and tRNA(Gln), leading to the formation of s(2)U34, the first step of tRNA-mnm(5)s(2)U34 synthesis. Sulfur is provided by IscS, via a sulfur-relay system. Binds ATP and its substrate tRNAs. The polypeptide is tRNA-specific 2-thiouridylase MnmA (Escherichia coli O6:H1 (strain CFT073 / ATCC 700928 / UPEC)).